The following is a 421-amino-acid chain: Serine hydroxymethyltransferase (421 aa).

(6S)-5,6,7,8-tetrahydrofolate contacts are provided by residues leucine 121 and 125–127 (GHL). Residue lysine 230 is modified to N6-(pyridoxal phosphate)lysine. 355–357 (SPF) provides a ligand contact to (6S)-5,6,7,8-tetrahydrofolate.

The protein belongs to the SHMT family. In terms of assembly, homodimer. The cofactor is pyridoxal 5'-phosphate.

Its subcellular location is the cytoplasm. It catalyses the reaction (6R)-5,10-methylene-5,6,7,8-tetrahydrofolate + glycine + H2O = (6S)-5,6,7,8-tetrahydrofolate + L-serine. Its pathway is one-carbon metabolism; tetrahydrofolate interconversion. The protein operates within amino-acid biosynthesis; glycine biosynthesis; glycine from L-serine: step 1/1. In terms of biological role, catalyzes the reversible interconversion of serine and glycine with tetrahydrofolate (THF) serving as the one-carbon carrier. This reaction serves as the major source of one-carbon groups required for the biosynthesis of purines, thymidylate, methionine, and other important biomolecules. Also exhibits THF-independent aldolase activity toward beta-hydroxyamino acids, producing glycine and aldehydes, via a retro-aldol mechanism. The chain is Serine hydroxymethyltransferase from Psychromonas ingrahamii (strain DSM 17664 / CCUG 51855 / 37).